The chain runs to 479 residues: MSDVIIVGAGPTGLMLAGELRLQGVDVVVVDKDEEPTQFVRALGIHVRSIEIMEQRGLLDKFLAHGRKYPLGGFFAGISKPAPAHLDTAHGYVLGIPQPEIDRILAEHATEVGADIQRGKRVVAIRQDTDNVAAELSDGTTLHARYLVGCDGGRSTVRKLRSTSVFPASRTSADTLIGEMDVTMPADELAAVVAEIRETHKRFGVGPAGNGAFRVVVPAAEVADGRATPTTLDDIKQQLLAIAGTDFGVHSPRWLSRFGDATRLADDYRRDRVFLAGDAAHIHPPMGGQGLNLGVQDAFNLGWKLAAEINGWAPVGLLDTYESERRPVAADVLDNTRAQAELISTAAGPQAVRRLISELMEFEDVKRYLTEKITAISIRYDFGEGDDLLGRRLRNIALTRGNLYDLMRSGRGLLLDQGGQLSVDGWSDRADHIVDTSTELEAPAVLLRPDGHVAWIGDAQAELDTQLSTWFGRSARDRA.

FAD contacts are provided by threonine 12, aspartate 31, lysine 32, arginine 41, glutamine 98, valine 122, threonine 156, aspartate 278, leucine 291, and asparagine 292.

Belongs to the rifampicin monooxygenase family. It depends on FAD as a cofactor.

The enzyme catalyses rifampicin + NADPH + O2 = rifampicin para-naphthoquinone carboxamide + NADP(+) + H2O + H(+). It catalyses the reaction rifampicin + NADH + O2 = rifampicin para-naphthoquinone carboxamide + NAD(+) + H2O + H(+). Monooxygenase that can modify rifampicin, thereby inactivating its antibiotic activity. The protein is Rifampicin monooxygenase of Rhodococcus hoagii (Corynebacterium equii).